We begin with the raw amino-acid sequence, 274 residues long: Ribose-5-phosphate isomerase (274 aa).

Belongs to the ribose 5-phosphate isomerase family.

Its subcellular location is the cytoplasm. It catalyses the reaction aldehydo-D-ribose 5-phosphate = D-ribulose 5-phosphate. The protein operates within carbohydrate degradation; pentose phosphate pathway; D-ribose 5-phosphate from D-ribulose 5-phosphate (non-oxidative stage): step 1/1. The sequence is that of Ribose-5-phosphate isomerase (RKI1) from Kluyveromyces lactis (strain ATCC 8585 / CBS 2359 / DSM 70799 / NBRC 1267 / NRRL Y-1140 / WM37) (Yeast).